The chain runs to 355 residues: UDP-N-acetylglucosamine--N-acetylmuramyl-(pentapeptide) pyrophosphoryl-undecaprenol N-acetylglucosamine transferase (355 aa).

Residues 13-15, asparagine 125, arginine 162, serine 190, isoleucine 244, and glutamine 289 contribute to the UDP-N-acetyl-alpha-D-glucosamine site; that span reads TGG.

Belongs to the glycosyltransferase 28 family. MurG subfamily.

It is found in the cell inner membrane. It catalyses the reaction di-trans,octa-cis-undecaprenyl diphospho-N-acetyl-alpha-D-muramoyl-L-alanyl-D-glutamyl-meso-2,6-diaminopimeloyl-D-alanyl-D-alanine + UDP-N-acetyl-alpha-D-glucosamine = di-trans,octa-cis-undecaprenyl diphospho-[N-acetyl-alpha-D-glucosaminyl-(1-&gt;4)]-N-acetyl-alpha-D-muramoyl-L-alanyl-D-glutamyl-meso-2,6-diaminopimeloyl-D-alanyl-D-alanine + UDP + H(+). Its pathway is cell wall biogenesis; peptidoglycan biosynthesis. Its function is as follows. Cell wall formation. Catalyzes the transfer of a GlcNAc subunit on undecaprenyl-pyrophosphoryl-MurNAc-pentapeptide (lipid intermediate I) to form undecaprenyl-pyrophosphoryl-MurNAc-(pentapeptide)GlcNAc (lipid intermediate II). The polypeptide is UDP-N-acetylglucosamine--N-acetylmuramyl-(pentapeptide) pyrophosphoryl-undecaprenol N-acetylglucosamine transferase (Neisseria meningitidis serogroup A / serotype 4A (strain DSM 15465 / Z2491)).